We begin with the raw amino-acid sequence, 190 residues long: Ladderlectin (190 aa).

An N-terminal signal peptide occupies residues 1–18 (MAMLTISLLLCAAVALNG). The 120-residue stretch at 60–179 (GSRCFMFVET…GNSFPSGVLQ (120 aa)) folds into the C-type lectin domain. C153 and C169 are joined by a disulfide.

In terms of assembly, multimeric. Expressed in cells of the branchial epithelium, hepatic sinusoids, biliary epithelium, renal interstitium, skin, and sub-mucosal granular layer of the intestine. Highly expressed in caudal kidney. Moderately expressed in liver. Weakly expressed in gill, spleen, cranial kidney and skin. Isoform 1 is highly expressed in intestine. Isoform 2 is weakly expressed in intestine.

Functionally, lectin that binds sepharose in a calcium-dependent manner. The polypeptide is Ladderlectin (Oncorhynchus mykiss (Rainbow trout)).